The following is a 1553-amino-acid chain: ABC-type transporter cctS (1553 aa).

4 helical membrane passes run 27 to 47, 90 to 110, 114 to 134, and 151 to 171; these read LIPL…YFHA, LEVA…IFSG, DLTS…ILFV, and SVLY…AILG. N-linked (GlcNAc...) asparagine glycosylation is present at Asn-176. The next 5 helical transmembrane spans lie at 177-197, 286-306, 324-344, 413-433, and 438-458; these read FTIA…FHWT, LLWQ…PPVL, TAWL…VAGC, GYLY…TYLL, and GISG…NILI. Residues 293-582 enclose the ABC transmembrane type-1 1 domain; the sequence is ATLNSFAVFV…IADAITFLLR (290 aa). Asn-524 carries N-linked (GlcNAc...) asparagine glycosylation. A run of 2 helical transmembrane segments spans residues 527-547 and 550-570; these read TFFS…TVVW and SMGT…RIPF. The N-linked (GlcNAc...) asparagine glycan is linked to Asn-617. Residues 635–874 enclose the ABC transporter 1 domain; sequence NKRSDIQLTE…GRIDADIMQN (240 aa). 670 to 677 lines the ATP pocket; the sequence is GPSGSGKS. Asn-725 is a glycosylation site (N-linked (GlcNAc...) asparagine). A helical transmembrane segment spans residues 948 to 970; it reads WYWVLVLFMFGIQQFISLATNIW. One can recognise an ABC transmembrane type-1 2 domain in the interval 951–1255; it reads VLVLFMFGIQ…FVQLYAIVQQ (305 aa). The N-linked (GlcNAc...) asparagine glycan is linked to Asn-992. Residues 1017–1037 traverse the membrane as a helical segment; that stretch reads IYVAICLAYAFFTFARDLIVF. Asn-1085 carries an N-linked (GlcNAc...) asparagine glycan. 4 consecutive transmembrane segments (helical) span residues 1086 to 1108, 1113 to 1135, 1204 to 1224, and 1229 to 1249; these read ISTF…VFIS, AFLI…FING, FLGS…LESV, and AALV…FVQL. The ABC transporter 2 domain occupies 1294–1533; that stretch reads VRFDAYTTRY…DDDGIFRRLC (240 aa). 1328 to 1335 lines the ATP pocket; the sequence is GRTGAGKS.

This sequence belongs to the ABC transporter superfamily.

It is found in the membrane. Its pathway is mycotoxin biosynthesis. Functionally, ABC-type transporter; part of the gene cluster that mediates the biosynthesis of the mycotoxin cyclochlorotine, a hepatotoxic and carcinogenic cyclic chlorinated pentapeptide. CctS is essential for the biosynthesis of cyclochlorotine, maybe as a chloride channel that supplies chloride for chlorination by cctP2. The protein is ABC-type transporter cctS of Talaromyces islandicus (Penicillium islandicum).